The primary structure comprises 412 residues: Cytochrome P450-SOY (412 aa).

Residues 1 to 25 show a composition bias toward polar residues; sequence MTESTTDPARQNLDPTSPAPATSFP. The tract at residues 1–38 is disordered; the sequence is MTESTTDPARQNLDPTSPAPATSFPQDRGCPYHPPAGY. C361 lines the heme pocket.

It belongs to the cytochrome P450 family. Heme serves as cofactor.

The protein localises to the cytoplasm. The chain is Cytochrome P450-SOY (cyp105D1) from Streptomyces griseus.